The primary structure comprises 299 residues: Protoheme IX farnesyltransferase (299 aa).

Helical transmembrane passes span 27-47 (VVAL…HEHF), 53-73 (LIAL…NHLI), 97-117 (FNVL…LMLW), 121-141 (LTAY…TLYL), 149-169 (IVIA…SITG), 175-195 (AWLL…ALAI), 222-242 (ILLY…VGMA), 244-264 (YLYL…AIKL), and 273-293 (AIEM…ALLL).

It belongs to the UbiA prenyltransferase family. Protoheme IX farnesyltransferase subfamily.

It is found in the cell inner membrane. It catalyses the reaction heme b + (2E,6E)-farnesyl diphosphate + H2O = Fe(II)-heme o + diphosphate. It functions in the pathway porphyrin-containing compound metabolism; heme O biosynthesis; heme O from protoheme: step 1/1. Converts heme B (protoheme IX) to heme O by substitution of the vinyl group on carbon 2 of heme B porphyrin ring with a hydroxyethyl farnesyl side group. This chain is Protoheme IX farnesyltransferase, found in Vibrio vulnificus (strain YJ016).